A 135-amino-acid chain; its full sequence is UPF0355 protein SH2586 (135 aa).

The interval 105 to 135 (NSSHDEVEENNSAYEEIDITHYANESKGPKS) is disordered.

It belongs to the UPF0355 family.

This is UPF0355 protein SH2586 from Staphylococcus haemolyticus (strain JCSC1435).